We begin with the raw amino-acid sequence, 86 residues long: Mitochondrial import inner membrane translocase subunit Tim10 (86 aa).

The short motif at 29–54 (CQAKCIATAFKESELTKGEAVCLDRC) is the Twin CX3C motif element. Intrachain disulfides connect cysteine 29–cysteine 54 and cysteine 33–cysteine 50.

Belongs to the small Tim family. As to quaternary structure, heterohexamer; composed of 3 copies of tim-9/tin-9.1 and 3 copies of tim-10/tin-10, named soluble 70 kDa complex. The complex associates with the tim-22 component of the TIM22 complex. Interacts with multi-pass transmembrane proteins in transit.

It localises to the mitochondrion inner membrane. Functionally, mitochondrial intermembrane chaperone that participates in the import and insertion of multi-pass transmembrane proteins into the mitochondrial inner membrane. May also be required for the transfer of beta-barrel precursors from the TOM complex to the sorting and assembly machinery (SAM complex) of the outer membrane. Acts as a chaperone-like protein that protects the hydrophobic precursors from aggregation and guide them through the mitochondrial intermembrane space. The sequence is that of Mitochondrial import inner membrane translocase subunit Tim10 (tin-10) from Caenorhabditis briggsae.